Here is a 104-residue protein sequence, read N- to C-terminus: Small ribosomal subunit protein uS10 (104 aa).

The protein belongs to the universal ribosomal protein uS10 family. In terms of assembly, part of the 30S ribosomal subunit.

Functionally, involved in the binding of tRNA to the ribosomes. This is Small ribosomal subunit protein uS10 from Buchnera aphidicola subsp. Baizongia pistaciae (strain Bp).